The following is a 1240-amino-acid chain: DNA polymerase II large subunit (1240 aa).

This sequence belongs to the archaeal DNA polymerase II family. As to quaternary structure, heterodimer of a large subunit and a small subunit.

It carries out the reaction DNA(n) + a 2'-deoxyribonucleoside 5'-triphosphate = DNA(n+1) + diphosphate. The enzyme catalyses Exonucleolytic cleavage in the 3'- to 5'-direction to yield nucleoside 5'-phosphates.. In terms of biological role, possesses two activities: a DNA synthesis (polymerase) and an exonucleolytic activity that degrades single-stranded DNA in the 3'- to 5'-direction. Has a template-primer preference which is characteristic of a replicative DNA polymerase. The protein is DNA polymerase II large subunit of Methanopyrus kandleri (strain AV19 / DSM 6324 / JCM 9639 / NBRC 100938).